We begin with the raw amino-acid sequence, 311 residues long: HPr kinase/phosphorylase (311 aa).

Catalysis depends on residues H139 and K160. 154 to 161 (GASGVGKS) is an ATP binding site. Position 161 (S161) interacts with Mg(2+). The active-site Proton acceptor; for phosphorylation activity. Proton donor; for dephosphorylation activity is the D178. Positions 202–211 (LEIRGIGIID) are important for the catalytic mechanism of both phosphorylation and dephosphorylation. E203 provides a ligand contact to Mg(2+). R244 is an active-site residue. An important for the catalytic mechanism of dephosphorylation region spans residues 265–270 (PVRPGR).

This sequence belongs to the HPrK/P family. As to quaternary structure, homohexamer. Mg(2+) serves as cofactor.

It catalyses the reaction [HPr protein]-L-serine + ATP = [HPr protein]-O-phospho-L-serine + ADP + H(+). The catalysed reaction is [HPr protein]-O-phospho-L-serine + phosphate + H(+) = [HPr protein]-L-serine + diphosphate. Catalyzes the ATP- as well as the pyrophosphate-dependent phosphorylation of a specific serine residue in HPr, a phosphocarrier protein of the phosphoenolpyruvate-dependent sugar phosphotransferase system (PTS). HprK/P also catalyzes the pyrophosphate-producing, inorganic phosphate-dependent dephosphorylation (phosphorolysis) of seryl-phosphorylated HPr (P-Ser-HPr). The two antagonistic activities of HprK/P are regulated by several intracellular metabolites, which change their concentration in response to the absence or presence of rapidly metabolisable carbon sources (glucose, fructose, etc.) in the growth medium. Therefore, by controlling the phosphorylation state of HPr, HPrK/P is a sensor enzyme that plays a major role in the regulation of carbon metabolism and sugar transport: it mediates carbon catabolite repression (CCR), and regulates PTS-catalyzed carbohydrate uptake and inducer exclusion. This chain is HPr kinase/phosphorylase, found in Exiguobacterium sibiricum (strain DSM 17290 / CCUG 55495 / CIP 109462 / JCM 13490 / 255-15).